Consider the following 1184-residue polypeptide: DNA-directed RNA polymerase subunit beta' (1184 aa).

Zn(2+) contacts are provided by Cys60, Cys62, Cys75, and Cys78. Residues Asp449, Asp451, and Asp453 each coordinate Mg(2+). Cys794, Cys867, Cys874, and Cys877 together coordinate Zn(2+).

This sequence belongs to the RNA polymerase beta' chain family. As to quaternary structure, the RNAP catalytic core consists of 2 alpha, 1 beta, 1 beta' and 1 omega subunit. When a sigma factor is associated with the core the holoenzyme is formed, which can initiate transcription. Mg(2+) is required as a cofactor. Requires Zn(2+) as cofactor.

The catalysed reaction is RNA(n) + a ribonucleoside 5'-triphosphate = RNA(n+1) + diphosphate. Its function is as follows. DNA-dependent RNA polymerase catalyzes the transcription of DNA into RNA using the four ribonucleoside triphosphates as substrates. The protein is DNA-directed RNA polymerase subunit beta' of Thermoanaerobacter sp. (strain X514).